Here is a 470-residue protein sequence, read N- to C-terminus: Iron-sulfur cluster assembly protein SufB (470 aa).

Belongs to the iron-sulfur cluster assembly SufBD family. Component of a complex composed of SufB, SufC and SufD in a stoichiometric ratio of 1:2:1. Interacts with SufC. Interacts with SufD.

It functions in the pathway cofactor biosynthesis; iron-sulfur cluster biosynthesis. In terms of biological role, participates in the sulfur mobilization (SUF) pathway for iron-sulfur (Fe-S) cluster biogenesis. As part of a complex consisting of SufB-SufC(2)-SufD, involved in assembly of [4Fe-4S] clusters. Exhibits ATPase activity. This Plasmodium falciparum (isolate 3D7) protein is Iron-sulfur cluster assembly protein SufB.